The primary structure comprises 457 residues: Siroheme synthase (457 aa).

The interval 1–204 (MDHLPIFCQL…NDQKAITETT (204 aa)) is precorrin-2 dehydrogenase /sirohydrochlorin ferrochelatase. NAD(+) contacts are provided by residues 22–23 (DV) and 43–44 (LA). Residue S128 is modified to Phosphoserine. The interval 216–457 (GEVVLVGAGP…RDKLNWFSNH (242 aa)) is uroporphyrinogen-III C-methyltransferase. P225 contacts S-adenosyl-L-methionine. D248 acts as the Proton acceptor in catalysis. K270 acts as the Proton donor in catalysis. Residues 301–303 (GGD), I306, 331–332 (TA), M382, and G411 each bind S-adenosyl-L-methionine.

In the N-terminal section; belongs to the precorrin-2 dehydrogenase / sirohydrochlorin ferrochelatase family. It in the C-terminal section; belongs to the precorrin methyltransferase family.

It catalyses the reaction uroporphyrinogen III + 2 S-adenosyl-L-methionine = precorrin-2 + 2 S-adenosyl-L-homocysteine + H(+). It carries out the reaction precorrin-2 + NAD(+) = sirohydrochlorin + NADH + 2 H(+). The enzyme catalyses siroheme + 2 H(+) = sirohydrochlorin + Fe(2+). The protein operates within cofactor biosynthesis; adenosylcobalamin biosynthesis; precorrin-2 from uroporphyrinogen III: step 1/1. It participates in cofactor biosynthesis; adenosylcobalamin biosynthesis; sirohydrochlorin from precorrin-2: step 1/1. Its pathway is porphyrin-containing compound metabolism; siroheme biosynthesis; precorrin-2 from uroporphyrinogen III: step 1/1. It functions in the pathway porphyrin-containing compound metabolism; siroheme biosynthesis; siroheme from sirohydrochlorin: step 1/1. The protein operates within porphyrin-containing compound metabolism; siroheme biosynthesis; sirohydrochlorin from precorrin-2: step 1/1. Multifunctional enzyme that catalyzes the SAM-dependent methylations of uroporphyrinogen III at position C-2 and C-7 to form precorrin-2 via precorrin-1. Then it catalyzes the NAD-dependent ring dehydrogenation of precorrin-2 to yield sirohydrochlorin. Finally, it catalyzes the ferrochelation of sirohydrochlorin to yield siroheme. The chain is Siroheme synthase from Escherichia coli O6:H1 (strain CFT073 / ATCC 700928 / UPEC).